We begin with the raw amino-acid sequence, 166 residues long: MLLEEVRAGDRLSGAAARGDVQEVRRLLHRELVHPDALNRFGKTALQVMMFGSTAIALELLKQGASPNVQDTSGTSPVHDAARTGFLDTLKVLVEHGADVNVPDGTGALPIHLAVQEGHTAVVSFLAAESDLHRRDARGLTPLELALQRGAQDLVDILQGHMVAPL.

At Met1 the chain carries N-acetylmethionine. ANK repeat units lie at residues 41 to 69 (FGKT…SPNV), 73 to 102 (SGTS…DVNV), 106 to 135 (TGAL…LHRR), and 138 to 166 (RGLT…VAPL).

Belongs to the CDKN2 cyclin-dependent kinase inhibitor family. Interacts with CDK6.

Its subcellular location is the nucleus. The protein localises to the cytoplasm. Interacts strongly with CDK4 and CDK6 and inhibits them. In Homo sapiens (Human), this protein is Cyclin-dependent kinase 4 inhibitor D (CDKN2D).